Here is a 101-residue protein sequence, read N- to C-terminus: Histone H1-like protein EM6 (101 aa).

Composition is skewed to basic residues over residues 1–35 (AKKRSRSRKRSASRKRSRSRKRSASKKSSKKHVRK) and 58–101 (AKKK…RRRR). The segment at 1–101 (AKKRSRSRKR…SRTARSRRRR (101 aa)) is disordered. A run of 4 repeats spans residues 3–4 (KR), 5–6 (SR), 7–8 (SR), and 9–10 (KR). The interval 3–22 (KRSRSRKRSASRKRSRSRKR) is 10 X 2 AA approximate tandem repeats of [SK]-R. The 5; approximate repeat unit spans residues 11 to 12 (SA). 5 repeat units span residues 13 to 14 (SR), 15 to 16 (KR), 17 to 18 (SR), 19 to 20 (SR), and 21 to 22 (KR). Positions 32–65 (HVRKALAAGMKNHLLAHPKGSNNFILAKKKAPRR) are globular.

In terms of tissue distribution, sperm.

It is found in the nucleus. Its subcellular location is the chromosome. The protein is Histone H1-like protein EM6 of Ensis minor (Razor shell).